The chain runs to 89 residues: MARKSIIARNEKRKKLVEKYAAKREELKAAGDYQALSQLPRDSSATRLRTRCVLTGRGRGNYRKFGLCRNMFRKLALEGKLPGVRKASW.

Belongs to the universal ribosomal protein uS14 family. In terms of assembly, part of the 30S ribosomal subunit. Contacts proteins S3 and S10.

Binds 16S rRNA, required for the assembly of 30S particles and may also be responsible for determining the conformation of the 16S rRNA at the A site. The protein is Small ribosomal subunit protein uS14 of Chlorobaculum tepidum (strain ATCC 49652 / DSM 12025 / NBRC 103806 / TLS) (Chlorobium tepidum).